Consider the following 386-residue polypeptide: Cytotoxic granule associated RNA binding protein TIA1 (386 aa).

Methionine 1 bears the N-acetylmethionine mark. RRM domains lie at 7–83 (KTLY…WATT), 106–184 (FHVF…WATR), and 214–286 (CTVY…WGKE). Residues 355–376 (GPNYSVPPPQGQNGSMLPSQPA) form a disordered region.

In terms of assembly, homooligomer; homooligomerization is induced by Zn(2+). Interacts with FASTK; the interactions leads to its phosphorylation. Interacts (via RRM1 and the C-terminal glutamine-rich (Q) sequence) with SNRPC/U1-C (via N-terminus); thereby facilitating spliceosomal U1 snRNP recruitment to 5' splice sites. Post-translationally, phosphorylatedby FASTK; phosphorylation occurs after FAS ligation in FAS-mediated apoptosis and before DNA fragmentation.

It localises to the nucleus. Its subcellular location is the cytoplasm. The protein resides in the stress granule. Functionally, RNA-binding protein involved in the regulation of alternative pre-RNA splicing and mRNA translation by binding to uridine-rich (U-rich) RNA sequences. Binds to U-rich sequences immediately downstream from a 5' splice sites in a uridine-rich small nuclear ribonucleoprotein (U snRNP)-dependent fashion, thereby modulating alternative pre-RNA splicing. Preferably binds to the U-rich IAS1 sequence in a U1 snRNP-dependent manner; this binding is optimal if a 5' splice site is adjacent to IAS1. Activates the use of heterologous 5' splice sites; the activation depends on the intron sequence downstream from the 5' splice site, with a preference for a downstream U-rich sequence. By interacting with SNRPC/U1-C, promotes recruitment and binding of spliceosomal U1 snRNP to 5' splice sites followed by U-rich sequences, thereby facilitating atypical 5' splice site recognition by U1 snRNP. Activates splicing of alternative exons with weak 5' splice sites followed by a U-rich stretch on its own pre-mRNA and on TIAR mRNA. Acts as a modulator of alternative splicing for the apoptotic FAS receptor, thereby promoting apoptosis. Binds to the 5' splice site region of FAS intron 5 to promote accumulation of transcripts that include exon 6 at the expense of transcripts in which exon 6 is skipped, thereby leading to the transcription of a membrane-bound apoptotic FAS receptor, which promotes apoptosis. Binds to a conserved AU-rich cis element in COL2A1 intron 2 and modulates alternative splicing of COL2A1 exon 2. Also binds to the equivalent AT-rich element in COL2A1 genomic DNA, and may thereby be involved in the regulation of transcription. Involved in the repression of mRNA translation by binding to AU-rich elements (AREs) located in mRNA 3' untranslated regions (3' UTRs), including target ARE-bearing mRNAs encoding TNF and PTGS2. Also participates in the cellular response to environmental stress, by acting downstream of the stress-induced phosphorylation of EIF2S1/EIF2A to promote the recruitment of untranslated mRNAs to cytoplasmic stress granules (SGs), leading to stress-induced translational arrest. Formation and recruitment to SGs is regulated by Zn(2+). Possesses nucleolytic activity against cytotoxic lymphocyte target cells. The chain is Cytotoxic granule associated RNA binding protein TIA1 (Tia1) from Mus musculus (Mouse).